Reading from the N-terminus, the 280-residue chain is Protein YibA (280 aa).

The protein is Protein YibA (yibA) of Escherichia coli O157:H7.